Here is a 345-residue protein sequence, read N- to C-terminus: 4-hydroxy-2-oxovalerate aldolase 1 (345 aa).

One can recognise a Pyruvate carboxyltransferase domain in the interval Ile9–Ala261. A substrate-binding site is contributed by Arg17–Asp18. Residue Asp18 participates in Mn(2+) binding. His21 (proton acceptor) is an active-site residue. Residues Ser171 and His200 each coordinate substrate. His200 and His202 together coordinate Mn(2+). Tyr291 serves as a coordination point for substrate.

It belongs to the 4-hydroxy-2-oxovalerate aldolase family.

It carries out the reaction (S)-4-hydroxy-2-oxopentanoate = acetaldehyde + pyruvate. In Nocardia farcinica (strain IFM 10152), this protein is 4-hydroxy-2-oxovalerate aldolase 1.